Reading from the N-terminus, the 304-residue chain is Sulfate adenylyltransferase subunit 2 1 (304 aa).

This sequence belongs to the PAPS reductase family. CysD subfamily. In terms of assembly, heterodimer composed of CysD, the smaller subunit, and CysN.

The enzyme catalyses sulfate + ATP + H(+) = adenosine 5'-phosphosulfate + diphosphate. It participates in sulfur metabolism; hydrogen sulfide biosynthesis; sulfite from sulfate: step 1/3. Its function is as follows. With CysN forms the ATP sulfurylase (ATPS) that catalyzes the adenylation of sulfate producing adenosine 5'-phosphosulfate (APS) and diphosphate, the first enzymatic step in sulfur assimilation pathway. APS synthesis involves the formation of a high-energy phosphoric-sulfuric acid anhydride bond driven by GTP hydrolysis by CysN coupled to ATP hydrolysis by CysD. This Marinobacter nauticus (strain ATCC 700491 / DSM 11845 / VT8) (Marinobacter aquaeolei) protein is Sulfate adenylyltransferase subunit 2 1.